The primary structure comprises 380 residues: Kappa-type opioid receptor (380 aa).

Topologically, residues 1–57 (MEPPVQIFRGEPGPTCSPSTCLPPNGSGWFPGWAEPDGNGSAGSEDVLLEPAHISPV) are extracellular. 2 N-linked (GlcNAc...) asparagine glycosylation sites follow: Asn25 and Asn39. A helical membrane pass occupies residues 58-85 (ILVIITAVYSVVFVVGLVGNSLVMFVII). The Cytoplasmic portion of the chain corresponds to 86–95 (RYTKMKTATN). A helical membrane pass occupies residues 96–119 (IYIFNLALADALVTTTMPFQSTVY). Residues 120–132 (LMNSWPFGDVLCK) are Extracellular-facing. Cys131 and Cys210 are joined by a disulfide. Residues 133–154 (VVISIDYYNMFTSIFTLTMMSV) form a helical membrane-spanning segment. Topologically, residues 155 to 173 (DRYIAVCHPVKALDFRTPL) are cytoplasmic. A helical transmembrane segment spans residues 174 to 196 (KAKIINICIWILSSSVGISAIVL). The Extracellular segment spans residues 197–222 (GGTKVREDMEVIECSLQFPDDDYSWW). Residues 223–247 (DLFMKVCVFVFAFVIPVLIIIVCYT) form a helical membrane-spanning segment. The Cytoplasmic portion of the chain corresponds to 248–274 (LMILRLKSVRLLSGSREKDRNLRRITR). A helical membrane pass occupies residues 275-296 (LVLVVVAVFVVCWTPIHIFILV). Residues 297 to 311 (EALGSTAHSTAALSS) are Extracellular-facing. The chain crosses the membrane as a helical span at residues 312–333 (YYFCIALGYTNSSLNPILYAFL). The Cytoplasmic portion of the chain corresponds to 334–380 (DENFKRCFRDFCFPIKMRMERQSTSRVRNTVQDPAYVREVDGVNKPV). A lipid anchor (S-palmitoyl cysteine) is attached at Cys345.

The protein belongs to the G-protein coupled receptor 1 family. In terms of assembly, interacts with NHERF1. Interacts with GABARAPL1.

Its subcellular location is the cell membrane. G-protein coupled opioid receptor that functions as a receptor for endogenous alpha-neoendorphins and dynorphins, but has low affinity for beta-endorphins. Also functions as a receptor for various synthetic opioids and for the psychoactive diterpene salvinorin A. Ligand binding causes a conformation change that triggers signaling via guanine nucleotide-binding proteins (G proteins) and modulates the activity of down-stream effectors, such as adenylate cyclase. Signaling leads to the inhibition of adenylate cyclase activity. Inhibits neurotransmitter release by reducing calcium ion currents and increasing potassium ion conductance. Plays a role in the perception of pain. Plays a role in mediating reduced physical activity upon treatment with synthetic opioids. Plays a role in the regulation of salivation in response to synthetic opioids. May play a role in arousal and regulation of autonomic and neuroendocrine functions. This chain is Kappa-type opioid receptor (OPRK1), found in Bos taurus (Bovine).